Reading from the N-terminus, the 269-residue chain is Indole-3-glycerol phosphate synthase (269 aa).

It belongs to the TrpC family.

The catalysed reaction is 1-(2-carboxyphenylamino)-1-deoxy-D-ribulose 5-phosphate + H(+) = (1S,2R)-1-C-(indol-3-yl)glycerol 3-phosphate + CO2 + H2O. It functions in the pathway amino-acid biosynthesis; L-tryptophan biosynthesis; L-tryptophan from chorismate: step 4/5. This chain is Indole-3-glycerol phosphate synthase, found in Roseiflexus castenholzii (strain DSM 13941 / HLO8).